Consider the following 428-residue polypeptide: Histidine--tRNA ligase (428 aa).

It belongs to the class-II aminoacyl-tRNA synthetase family. Homodimer.

The protein localises to the cytoplasm. It catalyses the reaction tRNA(His) + L-histidine + ATP = L-histidyl-tRNA(His) + AMP + diphosphate + H(+). This chain is Histidine--tRNA ligase, found in Bordetella pertussis (strain Tohama I / ATCC BAA-589 / NCTC 13251).